Here is a 235-residue protein sequence, read N- to C-terminus: Probable septum site-determining protein MinC (235 aa).

The disordered stretch occupies residues 104 to 125; the sequence is KAVRPAPVEPATPSEPPQNANP. Positions 110–119 are enriched in pro residues; that stretch reads PVEPATPSEP.

It belongs to the MinC family. Interacts with MinD and FtsZ.

Its function is as follows. Cell division inhibitor that blocks the formation of polar Z ring septums. Rapidly oscillates between the poles of the cell to destabilize FtsZ filaments that have formed before they mature into polar Z rings. Prevents FtsZ polymerization. The chain is Probable septum site-determining protein MinC from Salmonella agona (strain SL483).